The sequence spans 431 residues: GTPase Obg (431 aa).

The Obg domain maps to 1-158 (MFVDQVKINV…REIRLELKVL (158 aa)). The segment at 125–145 (GNIHFASPKNPAPEIAENGEP) is disordered. The 177-residue stretch at 159–335 (ADVGLVGFPS…LLQRTADMLA (177 aa)) folds into the OBG-type G domain. GTP is bound by residues 165–172 (GFPSVGKS), 190–194 (FTTLV), 212–215 (DLPG), 282–285 (NKMD), and 316–318 (SAL). The Mg(2+) site is built by Ser172 and Thr192. The 79-residue stretch at 353–431 (YNFQPEAEFT…IDDFTFEYMA (79 aa)) folds into the OCT domain.

The protein belongs to the TRAFAC class OBG-HflX-like GTPase superfamily. OBG GTPase family. In terms of assembly, monomer. Requires Mg(2+) as cofactor.

The protein resides in the cytoplasm. An essential GTPase which binds GTP, GDP and possibly (p)ppGpp with moderate affinity, with high nucleotide exchange rates and a fairly low GTP hydrolysis rate. Plays a role in control of the cell cycle, stress response, ribosome biogenesis and in those bacteria that undergo differentiation, in morphogenesis control. In Levilactobacillus brevis (strain ATCC 367 / BCRC 12310 / CIP 105137 / JCM 1170 / LMG 11437 / NCIMB 947 / NCTC 947) (Lactobacillus brevis), this protein is GTPase Obg.